The chain runs to 240 residues: Lactate utilization protein C (240 aa).

The protein belongs to the LutC/YkgG family.

Its function is as follows. Is involved in L-lactate degradation and allows cells to grow with lactate as the sole carbon source. This is Lactate utilization protein C from Bacillus pumilus (strain SAFR-032).